The primary structure comprises 135 residues: Fatty acid-binding protein 5 (135 aa).

Ala2 carries the N-acetylalanine modification. Ser3 is subject to Phosphoserine. The Nuclear localization signal motif lies at 24–34; it reads KELGVGLALRK. 1-eicosanoylglycerol is bound by residues Cys43, Thr56, and Arg109. A disulfide bridge connects residues Cys120 and Cys127. A 1-eicosanoylglycerol-binding site is contributed by 129–131; the sequence is RVY. A (9Z,12Z)-octadecadienoate-binding site is contributed by 129–131; it reads RVY. Tyr131 is a binding site for hexadecanoate. Tyr131 is a binding site for N-eicosanoyl ethanolamine. Tyr131 is modified (phosphotyrosine).

The protein belongs to the calycin superfamily. Fatty-acid binding protein (FABP) family. Monomer. As to expression, widely expressed.

It is found in the cytoplasm. It localises to the nucleus. The protein resides in the synapse. The protein localises to the postsynaptic density. Its subcellular location is the secreted. The enzyme catalyses hexadecanoate(out) = hexadecanoate(in). The catalysed reaction is (9Z,12Z)-octadecadienoate(out) = (9Z,12Z)-octadecadienoate(in). It catalyses the reaction (9Z)-octadecenoate(out) = (9Z)-octadecenoate(in). Functionally, intracellular carrier for long-chain fatty acids and related active lipids, such as endocannabinoids, that regulate the metabolism and actions of the ligands they bind. In addition to the cytosolic transport, selectively delivers specific fatty acids from the cytosol to the nucleus, wherein they activate nuclear receptors. Delivers retinoic acid to the nuclear receptor peroxisome proliferator-activated receptor delta; which promotes proliferation and survival. May also serve as a synaptic carrier of endocannabinoid at central synapses and thus controls retrograde endocannabinoid signaling. Modulates inflammation by regulating PTGES induction via NF-kappa-B activation, and prostaglandin E2 (PGE2) biosynthesis during inflammation. May be involved in keratinocyte differentiation. This is Fatty acid-binding protein 5 from Mus musculus (Mouse).